The following is a 410-amino-acid chain: Cysteine desulfurase IscS (410 aa).

Pyridoxal 5'-phosphate-binding positions include 80 to 81 (AT), N160, Q188, and 208 to 210 (SGH). At K211 the chain carries N6-(pyridoxal phosphate)lysine. Residue T248 coordinates pyridoxal 5'-phosphate. C334 (cysteine persulfide intermediate) is an active-site residue. C334 is a [2Fe-2S] cluster binding site.

This sequence belongs to the class-V pyridoxal-phosphate-dependent aminotransferase family. NifS/IscS subfamily. As to quaternary structure, homodimer. Forms a heterotetramer with IscU, interacts with other sulfur acceptors. Requires pyridoxal 5'-phosphate as cofactor.

It localises to the cytoplasm. It carries out the reaction (sulfur carrier)-H + L-cysteine = (sulfur carrier)-SH + L-alanine. It functions in the pathway cofactor biosynthesis; iron-sulfur cluster biosynthesis. Functionally, master enzyme that delivers sulfur to a number of partners involved in Fe-S cluster assembly, tRNA modification or cofactor biosynthesis. Catalyzes the removal of elemental sulfur atoms from cysteine to produce alanine. Functions as a sulfur delivery protein for Fe-S cluster synthesis onto IscU, an Fe-S scaffold assembly protein, as well as other S acceptor proteins. This chain is Cysteine desulfurase IscS, found in Rickettsia rickettsii (strain Iowa).